The primary structure comprises 140 residues: General stress protein 26 (140 aa).

This is General stress protein 26 (ydaG) from Bacillus subtilis (strain 168).